A 219-amino-acid polypeptide reads, in one-letter code: KP6 killer toxin (219 aa).

Residues methionine 1–alanine 19 form the signal peptide. The propeptide occupies leucine 20–arginine 27. 4 disulfides stabilise this stretch: cysteine 32/cysteine 39, cysteine 43/cysteine 101, cysteine 45/cysteine 92, and cysteine 62/cysteine 78. Asparagine 98 carries N-linked (GlcNAc...) asparagine; by host glycosylation. Positions lysine 106–arginine 138 are excised as a propeptide. Residues glycine 120–proline 142 are disordered.

As to quaternary structure, heterodimer of two small polypeptides that are not covalently linked.

It is found in the secreted. Functionally, this protein is lethal to sensitive cells of the same or related species. The KP6 alpha subunit is known to recognize some cellular receptors before interaction of the complex with KP6 beta, precipitating cell death. The sequence is that of KP6 killer toxin from Ustilago maydis P6 virus (UmV6).